The sequence spans 601 residues: Aspartate--tRNA ligase (601 aa).

Position 183 (glutamate 183) interacts with L-aspartate. The interval glutamine 207 to lysine 210 is aspartate. Arginine 229 provides a ligand contact to L-aspartate. ATP-binding positions include arginine 229 to glutamate 231 and glutamine 238. Histidine 457 is an L-aspartate binding site. An ATP-binding site is contributed by glutamate 497. L-aspartate is bound at residue arginine 504. ATP is bound at residue glycine 549–arginine 552.

Belongs to the class-II aminoacyl-tRNA synthetase family. Type 1 subfamily. As to quaternary structure, homodimer.

The protein resides in the cytoplasm. The enzyme catalyses tRNA(Asp) + L-aspartate + ATP = L-aspartyl-tRNA(Asp) + AMP + diphosphate. Its function is as follows. Catalyzes the attachment of L-aspartate to tRNA(Asp) in a two-step reaction: L-aspartate is first activated by ATP to form Asp-AMP and then transferred to the acceptor end of tRNA(Asp). This chain is Aspartate--tRNA ligase, found in Leptospira interrogans serogroup Icterohaemorrhagiae serovar Lai (strain 56601).